The chain runs to 174 residues: NADH-ubiquinone oxidoreductase chain 6 (174 aa).

5 consecutive transmembrane segments (helical) span residues 1–21, 24–44, 46–66, 86–106, and 151–171; these read MTYVVFLLSVMFVMGFVGFSS, SPIYGGLGLIVSGGVGCGIVL, FGGSFLGLMMFLIYLGGMLVV, VMILGMFVLGVLMEVGLVVYM, and WLMVVAGWSLFVSIFIVIEIT.

Belongs to the complex I subunit 6 family. As to quaternary structure, core subunit of respiratory chain NADH dehydrogenase (Complex I) which is composed of 45 different subunits.

The protein resides in the mitochondrion inner membrane. It carries out the reaction a ubiquinone + NADH + 5 H(+)(in) = a ubiquinol + NAD(+) + 4 H(+)(out). Its function is as follows. Core subunit of the mitochondrial membrane respiratory chain NADH dehydrogenase (Complex I) which catalyzes electron transfer from NADH through the respiratory chain, using ubiquinone as an electron acceptor. Essential for the catalytic activity and assembly of complex I. This is NADH-ubiquinone oxidoreductase chain 6 (MT-ND6) from Oryctolagus cuniculus (Rabbit).